A 363-amino-acid chain; its full sequence is MTKRILMLEDGNYFIGDAIGSEKETIGEVVFNTGMTGYQETITDPSYYGQIITFTYPLVGNYGVNRDDFESINPAVKGVVVREAAEYPSNWRNQITLNEFLKEKGIPGIAGIDTRKLTKLIRKEGTLKGILSAATADKEELLHHLRSVRLPVDQVHEVSSAKAFASPGDGKRVVLVDYGVKSSILRELNKRNCYVTVVPYNTTAEEILAMHPDGVMLSNGPGDPKDVPEALEMIRGIQGKLPLFGICLGHQLFALANGADTFKLKFGHRGANHPVKELATGRVDFTAQNHGYAVEKESLIGTDLKVTHIELNDETVEGLAHKEYQAYTVQYHPEANPGPSDVNYLFDEFMEMMNVKEEGELHA.

CPSase regions lie at residues Met-1 to Gly-168 and Met-1 to Arg-172. The L-glutamine site is built by Ser-46, Gly-220, and Gly-222. A Glutamine amidotransferase type-1 domain is found at Arg-172–Gly-359. Catalysis depends on Cys-247, which acts as the Nucleophile. Residues Leu-248, Gln-251, Asn-289, Gly-291, and Tyr-292 each coordinate L-glutamine. Residues His-332 and Glu-334 contribute to the active site.

Belongs to the CarA family. In terms of assembly, composed of two chains; the small (or glutamine) chain promotes the hydrolysis of glutamine to ammonia, which is used by the large (or ammonia) chain to synthesize carbamoyl phosphate. Tetramer of heterodimers (alpha,beta)4.

It carries out the reaction hydrogencarbonate + L-glutamine + 2 ATP + H2O = carbamoyl phosphate + L-glutamate + 2 ADP + phosphate + 2 H(+). The catalysed reaction is L-glutamine + H2O = L-glutamate + NH4(+). It functions in the pathway amino-acid biosynthesis; L-arginine biosynthesis; carbamoyl phosphate from bicarbonate: step 1/1. Its pathway is pyrimidine metabolism; UMP biosynthesis via de novo pathway; (S)-dihydroorotate from bicarbonate: step 1/3. Functionally, small subunit of the glutamine-dependent carbamoyl phosphate synthetase (CPSase). CPSase catalyzes the formation of carbamoyl phosphate from the ammonia moiety of glutamine, carbonate, and phosphate donated by ATP, constituting the first step of 2 biosynthetic pathways, one leading to arginine and/or urea and the other to pyrimidine nucleotides. The small subunit (glutamine amidotransferase) binds and cleaves glutamine to supply the large subunit with the substrate ammonia. The polypeptide is Carbamoyl phosphate synthase small chain (Listeria innocua serovar 6a (strain ATCC BAA-680 / CLIP 11262)).